The chain runs to 473 residues: Trehalose-6-phosphate synthase (473 aa).

R10 is a D-glucose 6-phosphate binding site. A UDP-alpha-D-glucose-binding site is contributed by 21 to 22 (GG). D-glucose 6-phosphate is bound by residues Y76 and D130. UDP-alpha-D-glucose is bound by residues R262 and K267. A D-glucose 6-phosphate-binding site is contributed by R300. UDP-alpha-D-glucose-binding positions include F339 and 365 to 369 (LVAKE). The interval 454–473 (TPRSPERQQQNNVATFPKLA) is disordered.

Belongs to the glycosyltransferase 20 family. Homotetramer.

It catalyses the reaction D-glucose 6-phosphate + UDP-alpha-D-glucose = alpha,alpha-trehalose 6-phosphate + UDP + H(+). It participates in glycan biosynthesis; trehalose biosynthesis. Probably involved in the osmoprotection via the biosynthesis of trehalose. Catalyzes the transfer of glucose from UDP-alpha-D-glucose (UDP-Glc) to D-glucose 6-phosphate (Glc-6-P) to form trehalose-6-phosphate. Acts with retention of the anomeric configuration of the UDP-sugar donor. The protein is Trehalose-6-phosphate synthase of Salmonella choleraesuis (strain SC-B67).